Consider the following 227-residue polypeptide: Flagellar L-ring protein (227 aa).

The N-terminal stretch at 1 to 15 (MRTWAVLPILLMLVG) is a signal peptide. A lipid anchor (N-palmitoyl cysteine) is attached at Cys-16. Cys-16 is lipidated: S-diacylglycerol cysteine.

This sequence belongs to the FlgH family. As to quaternary structure, the basal body constitutes a major portion of the flagellar organelle and consists of four rings (L,P,S, and M) mounted on a central rod.

The protein localises to the cell outer membrane. Its subcellular location is the bacterial flagellum basal body. Assembles around the rod to form the L-ring and probably protects the motor/basal body from shearing forces during rotation. This chain is Flagellar L-ring protein, found in Syntrophotalea carbinolica (strain DSM 2380 / NBRC 103641 / GraBd1) (Pelobacter carbinolicus).